The following is a 416-amino-acid chain: MSLAKASLWTAASTLVKIGAGLLVGKLLAVSFGPAGLGLAANFRQLITVLGVLAGAGIFNGVTKYVAQYHDNPQQLRRVVGTSSAMVLGFSTLMALVFVLAAAPISQGLFGNTDYQGLVRLVALVQMGIAWGNLLLALMKGFRDAAGNALSLIVGSLIGVLAYYVSYRLGGYEGALLGLALIPALVVIPAAIMLIKRGVIPLSYLKPSWDNGLAGQLSKFTLMALITSVTLPVAYIMMRKLLAAQYSWDEVGIWQGVSSISDAYLQFITASFSVYLLPTLSRLTEKRDITREVVKSLKFVLPAVAAASFTVWLLRDFAIWLLLSNKFTAMRDLFAWQLVGDVLKVGAYVFGYLVIAKASLRFYILAEVSQFTLLMVFAHWLIPAHGALGAAQAYMATYIVYFSLCCGVFLLWRRRA.

The Cytoplasmic segment spans residues 1 to 17 (MSLAKASLWTAASTLVK). A helical transmembrane segment spans residues 18-38 (IGAGLLVGKLLAVSFGPAGLG). At 39 to 45 (LAANFRQ) the chain is on the periplasmic side. Residues 46-66 (LITVLGVLAGAGIFNGVTKYV) traverse the membrane as a helical segment. Over 67-84 (AQYHDNPQQLRRVVGTSS) the chain is Cytoplasmic. Residues 85–105 (AMVLGFSTLMALVFVLAAAPI) form a helical membrane-spanning segment. The Periplasmic portion of the chain corresponds to 106-121 (SQGLFGNTDYQGLVRL). Residues 122–142 (VALVQMGIAWGNLLLALMKGF) traverse the membrane as a helical segment. At 143–144 (RD) the chain is on the cytoplasmic side. Residues 145–165 (AAGNALSLIVGSLIGVLAYYV) traverse the membrane as a helical segment. Topologically, residues 166–174 (SYRLGGYEG) are periplasmic. A helical transmembrane segment spans residues 175–195 (ALLGLALIPALVVIPAAIMLI). Over 196–216 (KRGVIPLSYLKPSWDNGLAGQ) the chain is Cytoplasmic. Residues 217-237 (LSKFTLMALITSVTLPVAYIM) traverse the membrane as a helical segment. The Periplasmic portion of the chain corresponds to 238–259 (MRKLLAAQYSWDEVGIWQGVSS). A helical membrane pass occupies residues 260–280 (ISDAYLQFITASFSVYLLPTL). Topologically, residues 281–302 (SRLTEKRDITREVVKSLKFVLP) are cytoplasmic. Residues 303–323 (AVAAASFTVWLLRDFAIWLLL) traverse the membrane as a helical segment. Topologically, residues 324–334 (SNKFTAMRDLF) are periplasmic. A helical membrane pass occupies residues 335 to 355 (AWQLVGDVLKVGAYVFGYLVI). Residues 356–370 (AKASLRFYILAEVSQ) lie on the Cytoplasmic side of the membrane. The next 2 helical transmembrane spans lie at 371–391 (FTLL…LGAA) and 392–412 (QAYM…FLLW). Residues 413-416 (RRRA) lie on the Cytoplasmic side of the membrane.

The protein belongs to the polysaccharide transport (PST) (TC 2.A.66.2) family. As to quaternary structure, probably part of a complex composed of WzxE, WzyE and WzzE.

It is found in the cell inner membrane. The protein operates within bacterial outer membrane biogenesis; enterobacterial common antigen biosynthesis. In terms of biological role, mediates the transbilayer movement of Und-PP-GlcNAc-ManNAcA-Fuc4NAc (lipid III) from the inner to the outer leaflet of the cytoplasmic membrane during the assembly of enterobacterial common antigen (ECA). Required for the assembly of the phosphoglyceride-linked form of ECA (ECA(PG)) and the water-soluble cyclic form of ECA (ECA(CYC)). Could also mediate the translocation of Und-PP-GlcNAc. The chain is Lipid III flippase from Escherichia coli (strain K12).